Reading from the N-terminus, the 525-residue chain is Glucans biosynthesis protein G (525 aa).

The first 35 residues, methionine 1–alanine 35, serve as a signal peptide directing secretion.

This sequence belongs to the OpgD/OpgG family.

Its subcellular location is the periplasm. It functions in the pathway glycan metabolism; osmoregulated periplasmic glucan (OPG) biosynthesis. In terms of biological role, involved in the biosynthesis of osmoregulated periplasmic glucans (OPGs). The sequence is that of Glucans biosynthesis protein G from Pseudomonas paraeruginosa (strain DSM 24068 / PA7) (Pseudomonas aeruginosa (strain PA7)).